Reading from the N-terminus, the 44-residue chain is Small ribosomal subunit protein eS31 (44 aa).

Zn(2+)-binding residues include C18, C21, C35, and C38. The C4-type zinc-finger motif lies at 18 to 38 (CPRCGDTFLAAHDDRQVCGRC).

The protein belongs to the eukaryotic ribosomal protein eS31 family. In terms of assembly, part of the 30S ribosomal subunit. Zn(2+) serves as cofactor.

The sequence is that of Small ribosomal subunit protein eS31 from Halobacterium salinarum (strain ATCC 29341 / DSM 671 / R1).